We begin with the raw amino-acid sequence, 377 residues long: Molybdenum import ATP-binding protein ModC (377 aa).

The ABC transporter domain occupies 17–254; it reads ITGDEAIRAR…LDLPFAHDED (238 aa). 52 to 59 lines the ATP pocket; it reads GHSGSGKT. Positions 313 to 377 constitute a Mop domain; the sequence is DSSILNVLPA…AQVKGVALLR (65 aa).

This sequence belongs to the ABC transporter superfamily. Molybdate importer (TC 3.A.1.8) family. As to quaternary structure, the complex is composed of two ATP-binding proteins (ModC), two transmembrane proteins (ModB) and a solute-binding protein (ModA).

The protein resides in the cell inner membrane. It carries out the reaction molybdate(out) + ATP + H2O = molybdate(in) + ADP + phosphate + H(+). Its function is as follows. Part of the ABC transporter complex ModABC involved in molybdenum import. Responsible for energy coupling to the transport system. This is Molybdenum import ATP-binding protein ModC from Aromatoleum aromaticum (strain DSM 19018 / LMG 30748 / EbN1) (Azoarcus sp. (strain EbN1)).